The primary structure comprises 213 residues: FMN-dependent NADH:quinone oxidoreductase 1 (213 aa).

18–20 (SVS) contacts FMN.

This sequence belongs to the azoreductase type 1 family. Homodimer. Requires FMN as cofactor.

The catalysed reaction is 2 a quinone + NADH + H(+) = 2 a 1,4-benzosemiquinone + NAD(+). It carries out the reaction N,N-dimethyl-1,4-phenylenediamine + anthranilate + 2 NAD(+) = 2-(4-dimethylaminophenyl)diazenylbenzoate + 2 NADH + 2 H(+). Its function is as follows. Quinone reductase that provides resistance to thiol-specific stress caused by electrophilic quinones. Functionally, also exhibits azoreductase activity. Catalyzes the reductive cleavage of the azo bond in aromatic azo compounds to the corresponding amines. This Bacillus cereus (strain ATCC 10987 / NRS 248) protein is FMN-dependent NADH:quinone oxidoreductase 1.